A 104-amino-acid polypeptide reads, in one-letter code: uncharacterized protein (104 aa).

A run of 2 helical transmembrane segments spans residues 16–36 (LAFF…LASY) and 44–64 (GGFG…FLCI).

The protein resides in the cell membrane. This is an uncharacterized protein from Bacillus anthracis.